We begin with the raw amino-acid sequence, 334 residues long: Fructose-1,6-bisphosphatase class 1 (334 aa).

Positions 90, 113, 115, and 116 each coordinate Mg(2+). Substrate is bound by residues 116-119 (DGSS), asparagine 209, tyrosine 242, and lysine 272. Glutamate 278 contacts Mg(2+).

The protein belongs to the FBPase class 1 family. Homotetramer. Mg(2+) is required as a cofactor.

It localises to the cytoplasm. It catalyses the reaction beta-D-fructose 1,6-bisphosphate + H2O = beta-D-fructose 6-phosphate + phosphate. The protein operates within carbohydrate biosynthesis; gluconeogenesis. The chain is Fructose-1,6-bisphosphatase class 1 from Actinobacillus pleuropneumoniae serotype 5b (strain L20).